Consider the following 283-residue polypeptide: Bifunctional protein FolD 1 (283 aa).

NADP(+) contacts are provided by residues 166-168 and Ile232; that span reads GRS.

Belongs to the tetrahydrofolate dehydrogenase/cyclohydrolase family. Homodimer.

It catalyses the reaction (6R)-5,10-methylene-5,6,7,8-tetrahydrofolate + NADP(+) = (6R)-5,10-methenyltetrahydrofolate + NADPH. The enzyme catalyses (6R)-5,10-methenyltetrahydrofolate + H2O = (6R)-10-formyltetrahydrofolate + H(+). It functions in the pathway one-carbon metabolism; tetrahydrofolate interconversion. Functionally, catalyzes the oxidation of 5,10-methylenetetrahydrofolate to 5,10-methenyltetrahydrofolate and then the hydrolysis of 5,10-methenyltetrahydrofolate to 10-formyltetrahydrofolate. The sequence is that of Bifunctional protein FolD 1 from Lactobacillus johnsonii (strain CNCM I-12250 / La1 / NCC 533).